Consider the following 126-residue polypeptide: Glycine cleavage system H protein (126 aa).

The Lipoyl-binding domain maps to 21–103 (TVTVGISNHA…YEGGWIARIK (83 aa)). Lys-62 carries the N6-lipoyllysine modification.

Belongs to the GcvH family. The glycine cleavage system is composed of four proteins: P, T, L and H. (R)-lipoate serves as cofactor.

The glycine cleavage system catalyzes the degradation of glycine. The H protein shuttles the methylamine group of glycine from the P protein to the T protein. This Aliivibrio salmonicida (strain LFI1238) (Vibrio salmonicida (strain LFI1238)) protein is Glycine cleavage system H protein.